Here is a 228-residue protein sequence, read N- to C-terminus: uncharacterized protein (228 aa).

The first 15 residues, 1–15 (MKQKYLFIASMALAG), serve as a signal peptide directing secretion. The N-palmitoyl cysteine moiety is linked to residue cysteine 16. A lipid anchor (S-diacylglycerol cysteine) is attached at cysteine 16.

The protein to P.multocida PM0015.

The protein localises to the cell membrane. This is an uncharacterized protein from Pasteurella multocida (strain Pm70).